We begin with the raw amino-acid sequence, 116 residues long: Holo-[acyl-carrier-protein] synthase (116 aa).

Positions 5 and 50 each coordinate Mg(2+).

It belongs to the P-Pant transferase superfamily. AcpS family. The cofactor is Mg(2+).

Its subcellular location is the cytoplasm. The catalysed reaction is apo-[ACP] + CoA = holo-[ACP] + adenosine 3',5'-bisphosphate + H(+). Transfers the 4'-phosphopantetheine moiety from coenzyme A to a Ser of acyl-carrier-protein. This Nitratiruptor sp. (strain SB155-2) protein is Holo-[acyl-carrier-protein] synthase.